A 659-amino-acid chain; its full sequence is Beta-galactosidase BgaA (659 aa).

R103 is a binding site for substrate. C107 serves as a coordination point for Zn(2+). Residue N141 participates in substrate binding. E142 functions as the Proton donor in the catalytic mechanism. Zn(2+) contacts are provided by C148, C150, and C153. E298 acts as the Nucleophile in catalysis. Substrate is bound at residue W307.

The protein belongs to the glycosyl hydrolase 42 family. Dimer.

The catalysed reaction is Hydrolysis of terminal non-reducing beta-D-galactose residues in beta-D-galactosides.. With respect to regulation, inhibited by Cu(2+), Hg(2+) and Zn(2+). No effect with Ca(2+), Mg(2+), Mn(2+) or excess EDTA (10 mM). Its function is as follows. Involved in plant cell wall degradation in cooperation with cellulosome. Hydrolyzes both p-nitrophenyl-alpha-L-arabinopyranoside (pNPAp) and p-nitrophenyl-beta-D-galactopyranoside (pNPGp), with higher activity for pNPAp. Shows hydrolysis activity against p-nitrophenyl-beta-D-fucopyranoside (pNPFp), but not against p-nitrophenyl-alpha-L-arabinofuranoside (pNPAf), o-nitrophenyl-beta-D-galactopyranoside (oNPGp), p-nitrophenyl-beta-D-xylopyranoside (pNPXp), p-nitrophenyl-beta-D-glucopyranoside (pNPGLp), p-nitrophenyl-beta-D-cellobiopyranoside (pNPCp), p-nitrophenyl-beta-lactopyranoside (pNPLp) or p-nitrophenyl-alpha-galactopyranoside (pNPalphaGp). No detectable activity against arabinan or arabinoxylan, but activity against arabinogalactan can be detected. Increases degradation activity of alpha-L-arabinofuranosidase (ArfA) and endo-1,4-beta-xylanase (XynA) when corn fiber gum and corn stem powder are used as substrates. The polypeptide is Beta-galactosidase BgaA (bgaA) (Clostridium cellulovorans (strain ATCC 35296 / DSM 3052 / OCM 3 / 743B)).